A 219-amino-acid polypeptide reads, in one-letter code: MAAEDREMMEARGAGESCPTFPKMVPGDSKSEGKPRAYLEAESQKPDSSYDYLEEMEACEDGGCQGPLKSLSPKSCRATKGQAGDGPKPAELPPTPGTERNPEMELEKVRMEFELTRLKYLHEKNQRQRQHEVVMEQLQRERQHEVVMEQLQQEAAPRLFSGGLQNFLLPQNQFAMFLYCFIFIHIIYVTKEMVFFLFAKHYLFCIAAILLCLIKTFWS.

Composition is skewed to basic and acidic residues over residues 1–10 (MAAEDREMME) and 29–45 (SKSEGKPRAYLEAESQK). A disordered region spans residues 1-101 (MAAEDREMME…LPPTPGTERN (101 aa)). The stretch at 121–156 (LHEKNQRQRQHEVVMEQLQRERQHEVVMEQLQQEAA) forms a coiled coil. A run of 2 helical transmembrane segments spans residues 167–187 (FLLPQNQFAMFLYCFIFIHII) and 194–214 (VFFLFAKHYLFCIAAILLCLI).

It localises to the membrane. The chain is Transmembrane protein 247 (TMEM247) from Homo sapiens (Human).